A 331-amino-acid chain; its full sequence is DNA polymerase IV (331 aa).

Residues 1–174 (FFAAVEMRDN…LPLAKIPGVG (174 aa)) form the UmuC domain. Position 92 (D92) interacts with Mg(2+). E93 is an active-site residue.

The protein belongs to the DNA polymerase type-Y family. In terms of assembly, monomer. Mg(2+) is required as a cofactor.

The protein localises to the cytoplasm. The catalysed reaction is DNA(n) + a 2'-deoxyribonucleoside 5'-triphosphate = DNA(n+1) + diphosphate. Poorly processive, error-prone DNA polymerase involved in untargeted mutagenesis. Copies undamaged DNA at stalled replication forks, which arise in vivo from mismatched or misaligned primer ends. These misaligned primers can be extended by PolIV. Exhibits no 3'-5' exonuclease (proofreading) activity. May be involved in translesional synthesis, in conjunction with the beta clamp from PolIII. The protein is DNA polymerase IV of Escherichia fergusonii.